Consider the following 805-residue polypeptide: DNA gyrase subunit B (805 aa).

Residues 431–546 form the Toprim domain; the sequence is CEMYIVEGDS…NECVYIAQPP (116 aa). 3 residues coordinate Mg(2+): E437, D511, and D513.

Belongs to the type II topoisomerase GyrB family. Heterotetramer, composed of two GyrA and two GyrB chains. In the heterotetramer, GyrA contains the active site tyrosine that forms a transient covalent intermediate with DNA, while GyrB binds cofactors and catalyzes ATP hydrolysis. Mg(2+) is required as a cofactor. Requires Mn(2+) as cofactor. The cofactor is Ca(2+).

The protein localises to the cytoplasm. It carries out the reaction ATP-dependent breakage, passage and rejoining of double-stranded DNA.. In terms of biological role, a type II topoisomerase that negatively supercoils closed circular double-stranded (ds) DNA in an ATP-dependent manner to modulate DNA topology and maintain chromosomes in an underwound state. Negative supercoiling favors strand separation, and DNA replication, transcription, recombination and repair, all of which involve strand separation. Also able to catalyze the interconversion of other topological isomers of dsDNA rings, including catenanes and knotted rings. Type II topoisomerases break and join 2 DNA strands simultaneously in an ATP-dependent manner. This chain is DNA gyrase subunit B, found in Chlamydia pneumoniae (Chlamydophila pneumoniae).